A 271-amino-acid chain; its full sequence is uncharacterized protein (271 aa).

Residues 1-202 (MLNSPGTRRP…APSSALSHQG (202 aa)) form a disordered region. The segment covering 10–23 (PVKEAQKYGEDSQK) has biased composition (basic and acidic residues). Composition is skewed to low complexity over residues 33-50 (RSSV…SSSP) and 59-73 (GRPS…TSAP). The span at 92–101 (TRSSANQLPQ) shows a compositional bias: polar residues. The segment covering 121–142 (LRRRSHGDRCVPRSRRRPRPRP) has biased composition (basic residues).

This is an uncharacterized protein from Homo sapiens (Human).